Reading from the N-terminus, the 176-residue chain is Pituitary adenylate cyclase-activating polypeptide (176 aa).

A signal peptide spans 1–24 (MTMCSGARLALLVYGIIMHSSVYS). A propeptide spanning residues 25–79 (SPAAAGLRFPGIRPEEEAYGEDGNPLPDFDGSEPPGAGSPASAPRAAAAWYRPAG) is cleaved from the precursor. The interval 39-68 (EEEAYGEDGNPLPDFDGSEPPGAGSPASAP) is disordered. Positions 56–68 (SEPPGAGSPASAP) are enriched in low complexity. The interval 150-158 (VKKYLAAVL) is important for receptor binding. Leu158 is modified (leucine amide). At Lys169 the chain carries Lysine amide. A propeptide spanning residues 173–176 (IAYL) is cleaved from the precursor.

The protein belongs to the glucagon family.

The protein localises to the secreted. In terms of biological role, PACAP is a neuropeptide involved in diverse array of physiological processes through activating the PACAP subfamily of class B1 G protein-coupled receptors: VIP receptor 1 (VIPR1), VIP receptor 2 (VIPR2), and PACAP type I receptor (ADCYAP1R1). Exerts neuroprotective and general cytoprotective effects due to anti-apoptotic, anti-inflammatory, and antioxidant actions. Promotes neuron projection development through the RAPGEF2/Rap1/B-Raf/ERK pathway. In chromaffin cells, induces long-lasting increase of intracellular calcium concentrations and neuroendocrine secretion. Involved in the control of glucose homeostasis, induces insulin secretion by pancreatic beta cells. PACAP exists in two bioactive forms from proteolysis of the same precursor protein, PACAP27 and PACAP38, which differ by eleven amino acid residues in the C-terminus. The protein is Pituitary adenylate cyclase-activating polypeptide of Homo sapiens (Human).